A 522-amino-acid polypeptide reads, in one-letter code: Glutamate--cysteine ligase (522 aa).

It belongs to the glutamate--cysteine ligase type 1 family. Type 1 subfamily.

It catalyses the reaction L-cysteine + L-glutamate + ATP = gamma-L-glutamyl-L-cysteine + ADP + phosphate + H(+). The protein operates within sulfur metabolism; glutathione biosynthesis; glutathione from L-cysteine and L-glutamate: step 1/2. This Shewanella pealeana (strain ATCC 700345 / ANG-SQ1) protein is Glutamate--cysteine ligase.